The following is a 663-amino-acid chain: Subtilisin-like serine protease (663 aa).

Residues 1–23 (MKKFGAVVLALFLVGLMAGSVLA) form the signal peptide. Positions 24-136 (APQKPAVRNV…IQEDYVVKVA (113 aa)) are cleaved as a propeptide — removed in mature form. The region spanning 139-439 (TEGLDESAAQ…AGRVNAYKAA (301 aa)) is the Peptidase S8 domain. Residues Asp170, His203, and Ser382 each act as charge relay system in the active site. Ca(2+) is bound by residues Pro420, Ile423, Asp483, Leu484, Asp485, Asp497, Tyr498, Thr501, and Glu507. Residues 537–565 (VSDGSLGQPSGGGSEPSPSPSPEPTVDEK) form a disordered region. Residues 563-663 (DEKTFTGTVH…YQLDAKVYYG (101 aa)) constitute a propeptide, removed in mature form.

It belongs to the peptidase S8 family. Monomer.

The enzyme catalyses Hydrolysis of proteins with broad specificity for peptide bonds, and a preference for a large uncharged residue in P1. Hydrolyzes peptide amides.. With respect to regulation, resistant to treatment with 5% SDS, 8 M urea, 10% Triton X-100 or 10% Tween-20. Fully active although less stable in the presence of 10 mM EDTA. Activity not affected by the absence or presence of 10 mM CaCl(2). Unstable in the presence of 2 M or over GdnHCl and loses 35% and 99% of its activity upon incubation with 2 and 4 M GdnHCl, respectively, for 1 hour at 55 degrees Celsius. Nearly fully loses activity upon incubation at pH 2.0. Its function is as follows. Serine protease with a broad substrate specificity. The chain is Subtilisin-like serine protease from Thermococcus kodakarensis (strain ATCC BAA-918 / JCM 12380 / KOD1) (Pyrococcus kodakaraensis (strain KOD1)).